A 183-amino-acid polypeptide reads, in one-letter code: MRNISNRERRNKDCLKLIEKNFSNNVLLSQIEAKNAYQRFIEKQIKGLSIAAFIVQDYDYTEIKVKYYRKQKIAWKIFFDQLKNDINLTDHNLILQDQFKKQLMLTSKKDPKCLERFINSLKELGLYNKYKKTMSNLNNKQIKTYANLLFSIYENKEIRSEIKLRVLKNVILQLPIIFDCISK.

This is an uncharacterized protein from Acanthamoeba polyphaga mimivirus (APMV).